Reading from the N-terminus, the 113-residue chain is Protein CTLA-2-beta (113 aa).

A run of 2 repeats spans residues 15–17 (EWK) and 18–20 (EWK). Positions 15–20 (EWKEWK) are 2 X 3 AA tandem repeats of E-W-K.

To the propeptide regions of cysteine proteases.

Its function is as follows. Not known, expressed in activated T-cell. The polypeptide is Protein CTLA-2-beta (Ctla2b) (Mus musculus (Mouse)).